Here is a 534-residue protein sequence, read N- to C-terminus: Serine protease vicPa (534 aa).

The N-terminal stretch at 1 to 17 (MLCYLLIHILCLQAVLG) is a signal peptide. Asn-65 and Asn-126 each carry an N-linked (GlcNAc...) asparagine glycan. The active-site Charge relay system is Ser-174. Asn-297, Asn-416, and Asn-436 each carry an N-linked (GlcNAc...) asparagine glycan. The active-site Charge relay system is Asp-450.

It belongs to the peptidase S28 family.

The protein operates within mycotoxin biosynthesis. In terms of biological role, serine protease, part of the gene cluster that mediates the biosynthesis of the secondary metabolite victorin, the molecular basis for Victoria blight of oats. Within the pathway, vicPa and vicPb are probably involved in the processing of the vicA1 and vicA2 precursors. The pathway starts with the processing of the precursor vicA1 by several endopeptidases including kexin proteases as well as the cluster-specific S28 family peptidases vicPa and vicPb to produce 7 identical copies of the hexapeptide Gly-Leu-Lys-Leu-Ala-Phe. After being excised from the precursor peptide, the core peptides are cyclized and modified post-translationally by enzymes encoded within the gene cluster. The ustYa family oxidase vicYb is required for the formation of the macrocycle in victorin and the copper amine oxidases (CAOs) vicK1 and vicK2 are responsible for converting victorin to the active form by oxidizing the N-terminal glycyl residue in the peptides to glyoxylate. Relaxed substrate specificity of enzymes in the victorin biosynthetic pathway results in a metabolic grid that produces a set of analogs including victorinines B, C, E or HV-toxin M. This Bipolaris victoriae (strain FI3) (Victoria blight of oats agent) protein is Serine protease vicPa.